The sequence spans 635 residues: UvrABC system protein C (635 aa).

In terms of domain architecture, GIY-YIG spans 20–97; sequence ERSGVYRMFD…IKKFQPKFNI (78 aa). In terms of domain architecture, UVR spans 207 to 242; the sequence is KELQENLSKKMEELSEQMRFEEAAEIRDRIKALSYV.

The protein belongs to the UvrC family. Interacts with UvrB in an incision complex.

The protein localises to the cytoplasm. In terms of biological role, the UvrABC repair system catalyzes the recognition and processing of DNA lesions. UvrC both incises the 5' and 3' sides of the lesion. The N-terminal half is responsible for the 3' incision and the C-terminal half is responsible for the 5' incision. The protein is UvrABC system protein C of Rickettsia bellii (strain RML369-C).